The following is a 224-amino-acid chain: Small ribosomal subunit protein uS2 (224 aa).

Over residues 1–14 the composition is skewed to basic and acidic residues; it reads MAEAKPAPEKEAAV. The tract at residues 1-32 is disordered; that stretch reads MAEAKPAPEKEAAVKTESVPVADDEAASAKEG.

It belongs to the universal ribosomal protein uS2 family.

The polypeptide is Small ribosomal subunit protein uS2 (Methanosarcina mazei (strain ATCC BAA-159 / DSM 3647 / Goe1 / Go1 / JCM 11833 / OCM 88) (Methanosarcina frisia)).